We begin with the raw amino-acid sequence, 333 residues long: HTH-type transcriptional regulator pepR1 (333 aa).

One can recognise an HTH lacI-type domain in the interval 6-60; that stretch reads VTIYDVAREAKVSMATVSRVVNGNNNVRKETRDRVMEVIKRLHYQPNAVAQGLAS. A DNA-binding region (H-T-H motif) is located at residues 8–27; it reads IYDVAREAKVSMATVSRVVN.

Functionally, transcriptional regulator of the pepQ gene for prolidase. The protein is HTH-type transcriptional regulator pepR1 (pepR1) of Lactobacillus delbrueckii subsp. lactis.